Reading from the N-terminus, the 426-residue chain is D-tagatose-1,6-bisphosphate aldolase subunit KbaZ (426 aa).

The protein belongs to the GatZ/KbaZ family. KbaZ subfamily. As to quaternary structure, forms a complex with KbaY.

It participates in carbohydrate metabolism; D-tagatose 6-phosphate degradation; D-glyceraldehyde 3-phosphate and glycerone phosphate from D-tagatose 6-phosphate: step 2/2. Its function is as follows. Component of the tagatose-1,6-bisphosphate aldolase KbaYZ that is required for full activity and stability of the Y subunit. Could have a chaperone-like function for the proper and stable folding of KbaY. When expressed alone, KbaZ does not show any aldolase activity. The sequence is that of D-tagatose-1,6-bisphosphate aldolase subunit KbaZ from Shigella flexneri.